Here is a 225-residue protein sequence, read N- to C-terminus: Phosphatidylserine decarboxylase proenzyme (225 aa).

Ser-195 functions as the Schiff-base intermediate with substrate; via pyruvic acid in the catalytic mechanism. At Ser-195 the chain carries Pyruvic acid (Ser); by autocatalysis.

Belongs to the phosphatidylserine decarboxylase family. PSD-A subfamily. Heterodimer of a large membrane-associated beta subunit and a small pyruvoyl-containing alpha subunit. The cofactor is pyruvate. In terms of processing, is synthesized initially as an inactive proenzyme. Formation of the active enzyme involves a self-maturation process in which the active site pyruvoyl group is generated from an internal serine residue via an autocatalytic post-translational modification. Two non-identical subunits are generated from the proenzyme in this reaction, and the pyruvate is formed at the N-terminus of the alpha chain, which is derived from the carboxyl end of the proenzyme. The post-translation cleavage follows an unusual pathway, termed non-hydrolytic serinolysis, in which the side chain hydroxyl group of the serine supplies its oxygen atom to form the C-terminus of the beta chain, while the remainder of the serine residue undergoes an oxidative deamination to produce ammonia and the pyruvoyl prosthetic group on the alpha chain.

The protein resides in the cell membrane. The enzyme catalyses a 1,2-diacyl-sn-glycero-3-phospho-L-serine + H(+) = a 1,2-diacyl-sn-glycero-3-phosphoethanolamine + CO2. It functions in the pathway phospholipid metabolism; phosphatidylethanolamine biosynthesis; phosphatidylethanolamine from CDP-diacylglycerol: step 2/2. Catalyzes the formation of phosphatidylethanolamine (PtdEtn) from phosphatidylserine (PtdSer). The sequence is that of Phosphatidylserine decarboxylase proenzyme from Gluconobacter oxydans (strain 621H) (Gluconobacter suboxydans).